Here is a 484-residue protein sequence, read N- to C-terminus: Dual specificity protein kinase CLK1 (484 aa).

The interval 1–42 (MRHSKRTYCPDWDDKDWDYGKWRSSSSHKRRKRSHSSAQENK) is disordered. Basic residues predominate over residues 26–35 (SSHKRRKRSH). S61 is subject to Phosphoserine. A disordered region spans residues 79 to 146 (DYTQGCEPGH…RTRSVEDDEE (68 aa)). Over residues 86-97 (PGHRQRDHESRY) the composition is skewed to basic and acidic residues. Positions 100–112 (HSSKSSGRSGRSS) are enriched in low complexity. Basic residues predominate over residues 113 to 138 (YKSKHRIHHSTSHRRSHGKSHRRKRT). Position 138 is a phosphothreonine (T138). Residue S140 is modified to Phosphoserine. A Protein kinase domain is found at 161–477 (YEIVDTLGEG…LREALKHPFF (317 aa)). Residues 167–175 (LGEGAFGKV) and K191 each bind ATP. Residue D288 is the Proton acceptor of the active site.

This sequence belongs to the protein kinase superfamily. CMGC Ser/Thr protein kinase family. Lammer subfamily. As to quaternary structure, interacts with PPIG and UBL5. Autophosphorylates on all three types of residues. Endothelial cells.

It is found in the nucleus. It carries out the reaction L-seryl-[protein] + ATP = O-phospho-L-seryl-[protein] + ADP + H(+). It catalyses the reaction L-threonyl-[protein] + ATP = O-phospho-L-threonyl-[protein] + ADP + H(+). The enzyme catalyses L-tyrosyl-[protein] + ATP = O-phospho-L-tyrosyl-[protein] + ADP + H(+). Its activity is regulated as follows. Regulates splicing of its own pre-mRNA according to its kinase activity; increased expression of the catalytically active form influences splicing to generate the catalytically inactive splicing variant lacking the kinase domain. Leucettine L41 inhibits its kinase activity and affects the regulation of alternative splicing mediated by phosphorylation of SR proteins. Its function is as follows. Dual specificity kinase acting on both serine/threonine and tyrosine-containing substrates. Phosphorylates serine- and arginine-rich (SR) proteins of the spliceosomal complex and may be a constituent of a network of regulatory mechanisms that enable SR proteins to control RNA splicing. Phosphorylates: SRSF1, SRSF3 and PTPN1. Regulates the alternative splicing of tissue factor (F3) pre-mRNA in endothelial cells. This is Dual specificity protein kinase CLK1 from Homo sapiens (Human).